Reading from the N-terminus, the 293-residue chain is GPN-loop GTPase 3 (293 aa).

13–18 (GAGKST) is a GTP binding site. The short motif at 70-72 (GPN) is the Gly-Pro-Asn (GPN)-loop; involved in dimer interface element. 176–179 (SKMD) provides a ligand contact to GTP. The segment covering 272–281 (HEAQEPREPN) has biased composition (basic and acidic residues). A disordered region spans residues 272 to 293 (HEAQEPREPNDEQDVDYEDADI). Residues 282–293 (DEQDVDYEDADI) show a composition bias toward acidic residues.

This sequence belongs to the GPN-loop GTPase family. In terms of assembly, heterodimers with gpn1 or gpn2. Binds to RNA polymerase II (RNAPII).

Its function is as follows. Small GTPase required for proper nuclear import of RNA polymerase II and III (RNAPII and RNAPIII). May act at an RNAP assembly step prior to nuclear import. The protein is GPN-loop GTPase 3 of Aspergillus fumigatus (strain ATCC MYA-4609 / CBS 101355 / FGSC A1100 / Af293) (Neosartorya fumigata).